A 358-amino-acid chain; its full sequence is Acyl-CoA desaturase 1 (358 aa).

The Cytoplasmic portion of the chain corresponds to 1-71; sequence MPAHMLQEIS…EGPPPKLEYV (71 aa). Low complexity predominate over residues 8–24; the sequence is EISSSYTTTTTITEPPS. The segment at 8 to 33 is disordered; that stretch reads EISSSYTTTTTITEPPSGNLQNGREK. A helical transmembrane segment spans residues 72–92; that stretch reads WRNIILMALLHVGALYGITLI. Residue asparagine 74 coordinates substrate. The Lumenal segment spans residues 93-96; the sequence is PSSK. The chain crosses the membrane as a helical span at residues 97–117; that stretch reads VYTLLWGIFYYLISALGITAG. Residues 118 to 216 are Cytoplasmic-facing; it reads AHRLWSHRTY…EKLVMFQRRY (99 aa). Histidine 119 and histidine 124 together coordinate Fe cation. The Histidine box-1 signature appears at 119–124; sequence HRLWSH. Residues asparagine 147, arginine 154, and aspartate 155 each contribute to the substrate site. The Fe cation site is built by histidine 156, histidine 159, and histidine 160. The Histidine box-2 signature appears at 156 to 160; the sequence is HRAHH. The substrate site is built by arginine 187 and lysine 188. Residues 217 to 236 form a helical membrane-spanning segment; the sequence is YKPGLLLMCFILPTLVPWYC. At 237 to 240 the chain is on the lumenal side; sequence WGET. Residues 241–262 form a helical membrane-spanning segment; sequence FLHSLFVSTFLRYTLVLNATWL. Tryptophan 261 contributes to the substrate binding site. Residues 263-358 lie on the Cytoplasmic side of the membrane; the sequence is VNSAAHLYGY…RTGDGSHKSS (96 aa). Fe cation-binding residues include histidine 268, histidine 297, histidine 300, and histidine 301. The Histidine box-3 signature appears at 297–301; sequence HNYHH.

This sequence belongs to the fatty acid desaturase type 1 family. It depends on Fe(2+) as a cofactor. As to expression, detected in liver (at protein level). Detected in adipose tissue. Detected in liver when rats are kept on a fat-free diet, but not when their food contains unsaturated fatty acids.

Its subcellular location is the endoplasmic reticulum membrane. It localises to the membrane. The catalysed reaction is octadecanoyl-CoA + 2 Fe(II)-[cytochrome b5] + O2 + 2 H(+) = (9Z)-octadecenoyl-CoA + 2 Fe(III)-[cytochrome b5] + 2 H2O. Its function is as follows. Stearoyl-CoA desaturase that utilizes O(2) and electrons from reduced cytochrome b5 to introduce the first double bond into saturated fatty acyl-CoA substrates. Catalyzes the insertion of a cis double bond at the Delta-9 position into fatty acyl-CoA substrates including palmitoyl-CoA and stearoyl-CoA. Gives rise to a mixture of 16:1 and 18:1 unsaturated fatty acids. Plays an important role in lipid biosynthesis. Plays an important role in regulating the expression of genes that are involved in lipogenesis and in regulating mitochondrial fatty acid oxidation. Plays an important role in body energy homeostasis. Contributes to the biosynthesis of membrane phospholipids, cholesterol esters and triglycerides. Required for normal development of sebaceous glands. Required for the biosynthesis of normal levels of Delta-9 unsaturated fatty acids and 1-alkyl-2,3-diacylglycerol in the Harderian gland. Required for normal production of meibum, an oily material that prevents drying of the cornea. This chain is Acyl-CoA desaturase 1 (Scd1), found in Rattus norvegicus (Rat).